A 436-amino-acid polypeptide reads, in one-letter code: GTPase Der (436 aa).

EngA-type G domains lie at 4 to 167 (PVVA…PKEE) and 176 to 351 (VKFS…DNHS). Residues 10-17 (GRPNVGKS), 57-61 (DTGGI), 119-122 (NKVD), 182-189 (GRPNVGKS), 229-233 (DTAGM), and 294-297 (NKWD) contribute to the GTP site. The KH-like domain maps to 352–436 (LRVQSSMLND…PIRVIARKRK (85 aa)).

Belongs to the TRAFAC class TrmE-Era-EngA-EngB-Septin-like GTPase superfamily. EngA (Der) GTPase family. Associates with the 50S ribosomal subunit.

Its function is as follows. GTPase that plays an essential role in the late steps of ribosome biogenesis. The chain is GTPase Der from Listeria welshimeri serovar 6b (strain ATCC 35897 / DSM 20650 / CCUG 15529 / CIP 8149 / NCTC 11857 / SLCC 5334 / V8).